Here is a 164-residue protein sequence, read N- to C-terminus: Ribonuclease H (164 aa).

The region spanning 9–150 (DMPRVTIYTD…ADTLANAATD (142 aa)) is the RNase H type-1 domain. 4 residues coordinate Mg(2+): Asp18, Glu56, Asp78, and Asp142.

Belongs to the RNase H family. As to quaternary structure, monomer. It depends on Mg(2+) as a cofactor.

Its subcellular location is the cytoplasm. It catalyses the reaction Endonucleolytic cleavage to 5'-phosphomonoester.. In terms of biological role, endonuclease that specifically degrades the RNA of RNA-DNA hybrids. The polypeptide is Ribonuclease H (Chromohalobacter salexigens (strain ATCC BAA-138 / DSM 3043 / CIP 106854 / NCIMB 13768 / 1H11)).